Here is a 772-residue protein sequence, read N- to C-terminus: Polyribonucleotide nucleotidyltransferase (772 aa).

Asp-488 and Asp-494 together coordinate Mg(2+). The region spanning 555-614 (PRLTTLKINPEKIRDVIGKGGAVIRGLQEETGTTINIDEDGTITIASTDPEKAEFAKKRI) is the KH domain. Residues 624–692 (GKVYEGPVTK…EKGRVKLSMK (69 aa)) form the S1 motif domain. Residues 690 to 772 (SMKALTERPA…QPYAPRDSQE (83 aa)) form a disordered region. Residues 703-740 (YSERPPREDRGDRGDRGGERRERSDRGDRGGDRGERAP) show a composition bias toward basic and acidic residues. Positions 743 to 757 (NSEQQQQPRSNEQQP) are enriched in low complexity.

Belongs to the polyribonucleotide nucleotidyltransferase family. Requires Mg(2+) as cofactor.

It localises to the cytoplasm. It carries out the reaction RNA(n+1) + phosphate = RNA(n) + a ribonucleoside 5'-diphosphate. Functionally, involved in mRNA degradation. Catalyzes the phosphorolysis of single-stranded polyribonucleotides processively in the 3'- to 5'-direction. This Variovorax paradoxus (strain S110) protein is Polyribonucleotide nucleotidyltransferase.